The sequence spans 267 residues: UPF0246 protein Dshi_3333 (267 aa).

It belongs to the UPF0246 family.

This chain is UPF0246 protein Dshi_3333, found in Dinoroseobacter shibae (strain DSM 16493 / NCIMB 14021 / DFL 12).